A 222-amino-acid chain; its full sequence is N-(5'-phosphoribosyl)anthranilate isomerase (222 aa).

It belongs to the TrpF family.

It catalyses the reaction N-(5-phospho-beta-D-ribosyl)anthranilate = 1-(2-carboxyphenylamino)-1-deoxy-D-ribulose 5-phosphate. It functions in the pathway amino-acid biosynthesis; L-tryptophan biosynthesis; L-tryptophan from chorismate: step 3/5. The protein is N-(5'-phosphoribosyl)anthranilate isomerase of Rhizobium etli (strain CIAT 652).